We begin with the raw amino-acid sequence, 202 residues long: Large ribosomal subunit protein uL13 (202 aa).

Belongs to the universal ribosomal protein uL13 family.

This chain is Large ribosomal subunit protein uL13, found in Caenorhabditis elegans.